The chain runs to 270 residues: Putative serine acetyltransferase (270 aa).

This sequence belongs to the transferase hexapeptide repeat family.

Its subcellular location is the cytoplasm. It localises to the nucleus. It carries out the reaction L-serine + acetyl-CoA = O-acetyl-L-serine + CoA. Its pathway is amino-acid biosynthesis; L-cysteine biosynthesis; L-cysteine from L-serine: step 1/2. This chain is Putative serine acetyltransferase, found in Schizosaccharomyces pombe (strain 972 / ATCC 24843) (Fission yeast).